The sequence spans 280 residues: MTVVVVTDTSCRLPADLREQWSIRQVPLHILLDGLDLRDGVDEIPDDIHKRHATTAGATPVELSAAYQRALADSGGDGVVAVHISSALSGTFRAAELTAAELGPAVRVIDSRSAAMGVGFAALAAGRAAAAGDELDTVARAAAAAVSRIHAFVAVARLDNLRRSGRISGAKAWLGTALALKPLLSVDDGKLVLVQRVRTVSNATAVMIDRVCQLVGDRPAALAVHHVADPAAANDVAAALAERLPACEPAMVTAMGPVLALHVGAGAVGVCVDVGASPPA.

The 272-residue stretch at 3-274 folds into the DegV domain; it reads VVVVTDTSCR…AGAVGVCVDV (272 aa). S89 lines the hexadecanoate pocket.

Functionally, may bind long-chain fatty acids, such as palmitate, and may play a role in lipid transport or fatty acid metabolism. In Mycobacterium bovis (strain ATCC BAA-935 / AF2122/97), this protein is DegV domain-containing protein Mb2440c.